The sequence spans 143 residues: uncharacterized protein (143 aa).

The 94-residue stretch at 50–143 folds into the Rhodanese domain; that stretch reads NKEDAVVVDL…GENLPLVRGK (94 aa). At Lys91 the chain carries N6-acetyllysine.

This is an uncharacterized protein from Escherichia coli O6:H1 (strain CFT073 / ATCC 700928 / UPEC).